Here is a 789-residue protein sequence, read N- to C-terminus: Protein translocase subunit SecA (789 aa).

ATP-binding positions include Q85, 103-107 (GEGKT), and D492.

It belongs to the SecA family. As to quaternary structure, monomer and homodimer. Part of the essential Sec protein translocation apparatus which comprises SecA, SecYEG and auxiliary proteins SecDF. Other proteins may also be involved.

The protein resides in the cell membrane. It localises to the cytoplasm. It carries out the reaction ATP + H2O + cellular proteinSide 1 = ADP + phosphate + cellular proteinSide 2.. Its function is as follows. Part of the Sec protein translocase complex. Interacts with the SecYEG preprotein conducting channel. Has a central role in coupling the hydrolysis of ATP to the transfer of proteins into and across the cell membrane, serving as an ATP-driven molecular motor driving the stepwise translocation of polypeptide chains across the membrane. This Limosilactobacillus fermentum (strain NBRC 3956 / LMG 18251) (Lactobacillus fermentum) protein is Protein translocase subunit SecA.